Reading from the N-terminus, the 200-residue chain is Holliday junction branch migration complex subunit RuvA (200 aa).

The interval 1–64 is domain I; it reads MYAYFRGRLV…EDALQLYGFA (64 aa). Positions 65-143 are domain II; the sequence is TEEEKQLFRL…KLAPVGSAVA (79 aa). The interval 144–154 is flexible linker; that stretch reads SVAADRGGFRE. A domain III region spans residues 154 to 200; that stretch reads EDAVNALMTLGFPRPVANQAVGCALEPEPDASLEVVIKRALATMHNR.

The protein belongs to the RuvA family. As to quaternary structure, homotetramer. Forms an RuvA(8)-RuvB(12)-Holliday junction (HJ) complex. HJ DNA is sandwiched between 2 RuvA tetramers; dsDNA enters through RuvA and exits via RuvB. An RuvB hexamer assembles on each DNA strand where it exits the tetramer. Each RuvB hexamer is contacted by two RuvA subunits (via domain III) on 2 adjacent RuvB subunits; this complex drives branch migration. In the full resolvosome a probable DNA-RuvA(4)-RuvB(12)-RuvC(2) complex forms which resolves the HJ.

The protein localises to the cytoplasm. In terms of biological role, the RuvA-RuvB-RuvC complex processes Holliday junction (HJ) DNA during genetic recombination and DNA repair, while the RuvA-RuvB complex plays an important role in the rescue of blocked DNA replication forks via replication fork reversal (RFR). RuvA specifically binds to HJ cruciform DNA, conferring on it an open structure. The RuvB hexamer acts as an ATP-dependent pump, pulling dsDNA into and through the RuvAB complex. HJ branch migration allows RuvC to scan DNA until it finds its consensus sequence, where it cleaves and resolves the cruciform DNA. This is Holliday junction branch migration complex subunit RuvA from Chlorobium phaeovibrioides (strain DSM 265 / 1930) (Prosthecochloris vibrioformis (strain DSM 265)).